A 304-amino-acid polypeptide reads, in one-letter code: UDP-N-acetylenolpyruvoylglucosamine reductase (304 aa).

An FAD-binding PCMH-type domain is found at 31 to 196; sequence RVGGPAERFY…VAAELELAPG (166 aa). Arginine 176 is a catalytic residue. Serine 225 (proton donor) is an active-site residue. Residue glutamate 295 is part of the active site.

It belongs to the MurB family. FAD is required as a cofactor.

The protein localises to the cytoplasm. The catalysed reaction is UDP-N-acetyl-alpha-D-muramate + NADP(+) = UDP-N-acetyl-3-O-(1-carboxyvinyl)-alpha-D-glucosamine + NADPH + H(+). It participates in cell wall biogenesis; peptidoglycan biosynthesis. Functionally, cell wall formation. The polypeptide is UDP-N-acetylenolpyruvoylglucosamine reductase (Methylococcus capsulatus (strain ATCC 33009 / NCIMB 11132 / Bath)).